The primary structure comprises 365 residues: Phosphoserine aminotransferase (365 aa).

Arginine 40 provides a ligand contact to L-glutamate. Pyridoxal 5'-phosphate contacts are provided by residues 74–75 (AS), phenylalanine 99, threonine 155, aspartate 177, and glutamine 200. Lysine 201 is subject to N6-(pyridoxal phosphate)lysine. A pyridoxal 5'-phosphate-binding site is contributed by 241–242 (NT).

Belongs to the class-V pyridoxal-phosphate-dependent aminotransferase family. SerC subfamily. In terms of assembly, homodimer. Pyridoxal 5'-phosphate serves as cofactor.

The protein localises to the cytoplasm. It carries out the reaction O-phospho-L-serine + 2-oxoglutarate = 3-phosphooxypyruvate + L-glutamate. It catalyses the reaction 4-(phosphooxy)-L-threonine + 2-oxoglutarate = (R)-3-hydroxy-2-oxo-4-phosphooxybutanoate + L-glutamate. It functions in the pathway amino-acid biosynthesis; L-serine biosynthesis; L-serine from 3-phospho-D-glycerate: step 2/3. Catalyzes the reversible conversion of 3-phosphohydroxypyruvate to phosphoserine and of 3-hydroxy-2-oxo-4-phosphonooxybutanoate to phosphohydroxythreonine. The chain is Phosphoserine aminotransferase from Lactococcus lactis subsp. cremoris (strain MG1363).